The following is a 1415-amino-acid chain: Uveal autoantigen with coiled-coil domains and ankyrin repeats (1415 aa).

ANK repeat units lie at residues 69-98 (EGRS…DITT), 102-131 (AGRN…PTEH), 135-164 (QGRT…SVNA), 168-197 (DGRT…EINS), and 201-230 (QNRT…DVSL). The stretch at 288–376 (VKSSQREHRN…TIESLKNRFK (89 aa)) forms a coiled coil. An ANK 6 repeat occupies 617-646 (ELLAKLTLSVPTEKFESMKSLLSSEVNEKV). The stretch at 759 to 1381 (TVEELKKQLL…TDRQHQEVIA (623 aa)) forms a coiled coil. Lys1034 is covalently cross-linked (Glycyl lysine isopeptide (Lys-Gly) (interchain with G-Cter in SUMO2)). A compositionally biased stretch (basic and acidic residues) spans 1186–1201 (LREKEEESQNKTEEVS). The segment at 1186–1205 (LREKEEESQNKTEEVSKLQS) is disordered.

As to quaternary structure, component of the apoptosome complex, composed of APAF1, pro-caspase-9 and UACA. In the complex, it probably interacts directly with APAF1. Interacts with LGALS3, ARF6 and ACTB. Interacts with RAB39A. Highly expressed in adrenal, testis, kidney and large intestine.

Its subcellular location is the nucleus. The protein resides in the cytoplasm. The protein localises to the cytoskeleton. Functionally, regulates APAF1 expression and plays an important role in the regulation of stress-induced apoptosis. Promotes apoptosis by regulating three pathways, apoptosome up-regulation, LGALS3/galectin-3 down-regulation and NF-kappa-B inactivation. Regulates the redistribution of APAF1 into the nucleus after proapoptotic stress. Down-regulates the expression of LGALS3 by inhibiting NFKB1. Modulates isoactin dynamics to regulate the morphological alterations required for cell growth and motility. Interaction with ARF6 may modulate cell shape and motility after injury. May be involved in multiple neurite formation. The chain is Uveal autoantigen with coiled-coil domains and ankyrin repeats (UACA) from Canis lupus familiaris (Dog).